Here is an 83-residue protein sequence, read N- to C-terminus: Non-muscle caldesmon (83 aa).

Composition is skewed to basic and acidic residues over residues 1–44 (QTSE…KEEK) and 62–76 (NQLKDEKTKKDKESK). The myosin and calmodulin-binding stretch occupies residues 1 to 63 (QTSEKEGRSE…PKPGSIEENQ (63 aa)). Residues 1 to 83 (QTSEKEGRSE…ESKNILSLCL (83 aa)) are disordered.

Post-translationally, in non-muscle cells, phosphorylation by CDC2 during mitosis causes caldesmon to dissociate from microfilaments. Phosphorylation reduces caldesmon binding to actin, myosin, and calmodulin as well as its inhibition of actomyosin ATPase activity. Phosphorylation also occurs in both quiescent and dividing smooth muscle cells with similar effects on the interaction with actin and calmodulin and on microfilaments reorganization.

Its subcellular location is the cytoplasm. The protein localises to the cytoskeleton. It is found in the myofibril. The protein resides in the stress fiber. Actin- and myosin-binding protein implicated in the regulation of actomyosin interactions in smooth muscle and nonmuscle cells (could act as a bridge between myosin and actin filaments). Stimulates actin binding of tropomyosin which increases the stabilization of actin filament structure. In muscle tissues, inhibits the actomyosin ATPase by binding to F-actin. This inhibition is attenuated by calcium-calmodulin and is potentiated by tropomyosin. Interacts with actin, myosin, two molecules of tropomyosin and with calmodulin. Also plays an essential role during cellular mitosis and receptor capping. This Bos taurus (Bovine) protein is Non-muscle caldesmon (CALD1).